Here is a 290-residue protein sequence, read N- to C-terminus: 2-dehydro-3-deoxyphosphooctonate aldolase (290 aa).

Belongs to the KdsA family.

Its subcellular location is the cytoplasm. It carries out the reaction D-arabinose 5-phosphate + phosphoenolpyruvate + H2O = 3-deoxy-alpha-D-manno-2-octulosonate-8-phosphate + phosphate. The protein is 2-dehydro-3-deoxyphosphooctonate aldolase (KDSA) of Pisum sativum (Garden pea).